A 192-amino-acid chain; its full sequence is Glycerol-3-phosphate acyltransferase (192 aa).

5 consecutive transmembrane segments (helical) span residues 1 to 21, 51 to 71, 78 to 98, 112 to 132, and 155 to 175; these read MTSA…GVLL, LGAV…VLAV, PTVH…PVWL, VLLV…VAVF, and LTAR…LMLW.

This sequence belongs to the PlsY family. In terms of assembly, probably interacts with PlsX.

The protein localises to the cell inner membrane. It carries out the reaction an acyl phosphate + sn-glycerol 3-phosphate = a 1-acyl-sn-glycero-3-phosphate + phosphate. Its pathway is lipid metabolism; phospholipid metabolism. Its function is as follows. Catalyzes the transfer of an acyl group from acyl-phosphate (acyl-PO(4)) to glycerol-3-phosphate (G3P) to form lysophosphatidic acid (LPA). This enzyme utilizes acyl-phosphate as fatty acyl donor, but not acyl-CoA or acyl-ACP. The chain is Glycerol-3-phosphate acyltransferase from Myxococcus xanthus (strain DK1622).